Here is a 91-residue protein sequence, read N- to C-terminus: Small ribosomal subunit protein uS15 (91 aa).

The protein belongs to the universal ribosomal protein uS15 family. Part of the 30S ribosomal subunit. Forms a bridge to the 50S subunit in the 70S ribosome, contacting the 23S rRNA.

Functionally, one of the primary rRNA binding proteins, it binds directly to 16S rRNA where it helps nucleate assembly of the platform of the 30S subunit by binding and bridging several RNA helices of the 16S rRNA. Forms an intersubunit bridge (bridge B4) with the 23S rRNA of the 50S subunit in the ribosome. This Synechococcus sp. (strain JA-2-3B'a(2-13)) (Cyanobacteria bacterium Yellowstone B-Prime) protein is Small ribosomal subunit protein uS15.